The sequence spans 60 residues: Large ribosomal subunit protein bL32 (60 aa).

Positions 1–36 are disordered; it reads MAVQQNKKSPSKRGMHRSHNALNTPGLAIEPTTGET. The span at 9–19 shows a compositional bias: basic residues; that stretch reads SPSKRGMHRSH.

This sequence belongs to the bacterial ribosomal protein bL32 family.

This chain is Large ribosomal subunit protein bL32, found in Methylibium petroleiphilum (strain ATCC BAA-1232 / LMG 22953 / PM1).